We begin with the raw amino-acid sequence, 253 residues long: UPF0280 protein Mbar_A3697 (253 aa).

The protein belongs to the UPF0280 family.

The chain is UPF0280 protein Mbar_A3697 from Methanosarcina barkeri (strain Fusaro / DSM 804).